A 562-amino-acid polypeptide reads, in one-letter code: Protein wntless (562 aa).

The Cytoplasmic segment spans residues 1–13 (MSGTILENLSGRK). The helical transmembrane segment at 14–34 (LSILVSSLMLCQVACFLMGGL) threads the bilayer. Topologically, residues 35–239 (YAPVPAGHQT…AIHQNGGFTQ (205 aa)) are lumenal. 2 N-linked (GlcNAc...) asparagine glycosylation sites follow: Asn-58 and Asn-103. Residues 240–260 (VWLLLKTLLFPFVVGIMIWFW) form a helical membrane-spanning segment. Residues 261-270 (RRVHILQRSP) lie on the Cytoplasmic side of the membrane. A helical membrane pass occupies residues 271-291 (ALLEYMLLYLGGALSFLNLPL). Residues 292–311 (EYLTLSIEMPYMLLLSDVRQ) lie on the Lumenal side of the membrane. A helical membrane pass occupies residues 312–332 (GIFYAMLLSFWLVFAGEHMLI). Over 333–344 (QDTPNKSTIRSR) the chain is Cytoplasmic. Residues 345–365 (YWKHLSAVVVGCISLFVFDIC) form a helical membrane-spanning segment. The Lumenal portion of the chain corresponds to 366–390 (ERGVQLRNPFYSIWTTPLGAKVAMS). The helical transmembrane segment at 391-411 (FIVLAGVSAAIYFLFLCFMVW) threads the bilayer. The Cytoplasmic segment spans residues 412 to 441 (KVFKDIGDKRTSLPSMSQARRLHYEGLIYR). Residues 442–462 (FKFLMLATLLCAGLTVAGFIM) form a helical membrane-spanning segment. Residues 463–482 (GQMAEGHWKWNEDIEIQLTS) lie on the Lumenal side of the membrane. The chain crosses the membrane as a helical span at residues 483-503 (AFLTGVYGMWNIYIFALIILY). Topologically, residues 504–562 (APSHKQWPTMRHSDETTQSNENIVASAASEEIEFSNLPSDSNPSEISSLTSFTRKVAFD) are cytoplasmic.

The protein belongs to the wntless family. As to quaternary structure, interacts with wg; in the Golgi. Interacts with Vps35, a component of the retromer complex; wls stability is regulated by Vps35.

The protein localises to the presynaptic cell membrane. It localises to the postsynaptic cell membrane. The protein resides in the cell membrane. It is found in the endoplasmic reticulum membrane. Its subcellular location is the endosome membrane. The protein localises to the golgi apparatus membrane. Its function is as follows. A segment polarity gene required for wingless (wg)-dependent patterning processes, acting in both wg-sending cells and wg-target cells. In non-neuronal cells wls directs wg secretion. The wls traffic loop encompasses the Golgi, the cell surface, an endocytic compartment and a retrograde route leading back to the Golgi, and involves clathrin-mediated endocytosis and the retromer complex (a conserved protein complex consisting of Vps35 and Vps26). In neuronal cells (the larval motorneuron NMJ), the wg signal moves across the synapse via the release of wls-containing exosome-like vesicles. Postsynaptic wls is required for the trafficking of fz2 through the fz2-interacting protein Grip. The polypeptide is Protein wntless (Drosophila virilis (Fruit fly)).